The sequence spans 3354 residues: Cadherin-23 (3354 aa).

The N-terminal stretch at 1-23 (MGRHVATSCHVAWLLVLISGCWG) is a signal peptide. The Extracellular segment spans residues 24–3064 (QVNRLPFFTN…SVRLPDDMSA (3041 aa)). Cadherin domains lie at 34–132 (HFFD…APTF), 133–236 (HNQP…DPIF), 237–348 (INLP…APEF), 349–460 (NSSE…RPIF), 461–561 (SQPL…VPTF), 562–671 (QKDA…PPTF), 672–784 (SKPA…APYY), 779–890 (KDAP…DPTF), 891–995 (QNLP…TPTF), 996–1102 (FPAV…RPIF), 1103–1208 (LQSS…APVF), 1210–1313 (QQQY…AVQF), 1314–1418 (SNAS…SPRF), 1420–1527 (FTSD…PPVI), 1529–1634 (SPFG…APMF), 1635–1744 (QQPH…VPTF), 1745–1851 (PRDY…DPVL), 1852–1959 (LNLP…HPLF), 1960–2069 (TKST…RPTF), 2070–2174 (SPAT…RPEF), 2175–2293 (LNPI…TPQF), 2297–2402 (GITY…NPIF), 2403–2509 (DQPS…RPQF), 2510–2611 (SKPQ…RPVF), 2614–2722 (PPNG…EPLF), 2729–2846 (SPQY…PPRF), and 2847–2975 (TKAE…EEEF). N-linked (GlcNAc...) asparagine glycans are attached at residues Asn-155 and Asn-206. N-linked (GlcNAc...) asparagine glycosylation is found at Asn-349, Asn-393, Asn-434, Asn-466, Asn-472, Asn-652, Asn-694, Asn-765, Asn-810, Asn-827, Asn-941, Asn-1001, Asn-1018, Asn-1171, Asn-1282, Asn-1315, Asn-1473, Asn-1534, Asn-1651, Asn-1667, Asn-1818, Asn-1857, Asn-1889, Asn-1902, Asn-2013, Asn-2050, Asn-2129, Asn-2168, Asn-2195, Asn-2263, Asn-2357, and Asn-2369. N-linked (GlcNAc...) asparagine glycans are attached at residues Asn-2616, Asn-2749, Asn-2808, Asn-2877, Asn-2896, Asn-2941, and Asn-2981. A helical transmembrane segment spans residues 3065-3085 (LQMAIIVLAILLFLAAMLFVL). Topologically, residues 3086 to 3354 (MNWYYRTVHK…METPLEITEL (269 aa)) are cytoplasmic.

In terms of assembly, antiparallel heterodimer with PCDH15. Interacts with USH1C and USH1G. In terms of tissue distribution, particularly strong expression in the retina. Found also in the cochlea.

It localises to the cell membrane. Functionally, cadherins are calcium-dependent cell adhesion proteins. They preferentially interact with themselves in a homophilic manner in connecting cells. CDH23 is required for establishing and/or maintaining the proper organization of the stereocilia bundle of hair cells in the cochlea and the vestibule during late embryonic/early postnatal development. It is part of the functional network formed by USH1C, USH1G, CDH23 and MYO7A that mediates mechanotransduction in cochlear hair cells. Required for normal hearing. This Homo sapiens (Human) protein is Cadherin-23.